The primary structure comprises 233 residues: Protein FAM204A (233 aa).

2 disordered regions span residues 1 to 57 (MWSG…PSTE) and 79 to 127 (KFQE…ETQW). Residues 13–24 (SDVELNSDDDTT) are compositionally biased toward acidic residues. Over residues 34–46 (EGKEDGTFEKTEM) the composition is skewed to basic and acidic residues. Residues 98 to 109 (EKKKRKRSRKGK) show a composition bias toward basic residues. Positions 144–164 (VKRKKVEKSGLEKRIDQAVEE) form a coiled coil.

The protein is Protein FAM204A (FAM204A) of Bos taurus (Bovine).